Consider the following 254-residue polypeptide: 3-deoxy-manno-octulosonate cytidylyltransferase (254 aa).

This sequence belongs to the KdsB family.

It is found in the cytoplasm. The catalysed reaction is 3-deoxy-alpha-D-manno-oct-2-ulosonate + CTP = CMP-3-deoxy-beta-D-manno-octulosonate + diphosphate. Its pathway is nucleotide-sugar biosynthesis; CMP-3-deoxy-D-manno-octulosonate biosynthesis; CMP-3-deoxy-D-manno-octulosonate from 3-deoxy-D-manno-octulosonate and CTP: step 1/1. It participates in bacterial outer membrane biogenesis; lipopolysaccharide biosynthesis. Activates KDO (a required 8-carbon sugar) for incorporation into bacterial lipopolysaccharide in Gram-negative bacteria. This is 3-deoxy-manno-octulosonate cytidylyltransferase from Pseudomonas aeruginosa (strain ATCC 15692 / DSM 22644 / CIP 104116 / JCM 14847 / LMG 12228 / 1C / PRS 101 / PAO1).